The sequence spans 123 residues: Large ribosomal subunit protein uL14 (123 aa).

The protein belongs to the universal ribosomal protein uL14 family. Part of the 50S ribosomal subunit. Forms a cluster with proteins L3 and L19. In the 70S ribosome, L14 and L19 interact and together make contacts with the 16S rRNA in bridges B5 and B8.

Binds to 23S rRNA. Forms part of two intersubunit bridges in the 70S ribosome. This Buchnera aphidicola subsp. Cinara cedri (strain Cc) protein is Large ribosomal subunit protein uL14.